The primary structure comprises 37 residues: MSDIN-like toxin proprotein 5 (37 aa).

A propeptide spanning residues 1–10 (MSDINATRLP) is cleaved from the precursor. Positions 11-20 (LFFPPDFRPP) form a cross-link, cyclopeptide (Leu-Pro). A propeptide spanning residues 21 to 37 (CVGDADNFTLTRGENLC) is cleaved from the precursor.

Belongs to the MSDIN fungal toxin family. In terms of processing, processed by the macrocyclase-peptidase enzyme POPB to yield a toxic cyclic decapeptide. POPB first removes 10 residues from the N-terminus. Conformational trapping of the remaining peptide forces the enzyme to release this intermediate rather than proceed to macrocyclization. The enzyme rebinds the remaining peptide in a different conformation and catalyzes macrocyclization of the N-terminal 10 residues. As to expression, expressed in basidiocarps.

In terms of biological role, probable toxin that belongs to the MSDIN-like toxin family responsible for a large number of food poisoning cases and deaths. This chain is MSDIN-like toxin proprotein 5, found in Amanita exitialis (Guangzhou destroying angel).